Reading from the N-terminus, the 468-residue chain is Ribulose bisphosphate carboxylase large chain (468 aa).

K7 bears the N6,N6,N6-trimethyllysine mark. The substrate site is built by N116 and T166. Residue K168 is the Proton acceptor of the active site. K170 provides a ligand contact to substrate. Mg(2+) contacts are provided by K194, D196, and E197. At K194 the chain carries N6-carboxylysine. H287 (proton acceptor) is an active-site residue. Substrate contacts are provided by R288, H320, and S372.

The protein belongs to the RuBisCO large chain family. Type I subfamily. Heterohexadecamer of 8 large chains and 8 small chains; disulfide-linked. The disulfide link is formed within the large subunit homodimers. It depends on Mg(2+) as a cofactor. The disulfide bond which can form in the large chain dimeric partners within the hexadecamer appears to be associated with oxidative stress and protein turnover.

It is found in the plastid. The protein resides in the chloroplast. The enzyme catalyses 2 (2R)-3-phosphoglycerate + 2 H(+) = D-ribulose 1,5-bisphosphate + CO2 + H2O. The catalysed reaction is D-ribulose 1,5-bisphosphate + O2 = 2-phosphoglycolate + (2R)-3-phosphoglycerate + 2 H(+). Its function is as follows. RuBisCO catalyzes two reactions: the carboxylation of D-ribulose 1,5-bisphosphate, the primary event in carbon dioxide fixation, as well as the oxidative fragmentation of the pentose substrate in the photorespiration process. Both reactions occur simultaneously and in competition at the same active site. The polypeptide is Ribulose bisphosphate carboxylase large chain (Cornus alternifolia (Pagoda dogwood)).